The sequence spans 1450 residues: DNA-directed RNA polymerase RPB1 homolog (1450 aa).

The protein belongs to the RNA polymerase beta' chain family. Part of the viral DNA-directed RNA polymerase that consists of 8 polII-like subunits (RPB1, RPB2, RPB3, RPB5, RPB6, RPB7, RPB9, RPB10), a capping enzyme and a termination factor.

Its subcellular location is the virion. It catalyses the reaction RNA(n) + a ribonucleoside 5'-triphosphate = RNA(n+1) + diphosphate. Its function is as follows. Catalytic component of the DNA-directed RNA polymerase (RNAP) that catalyzes the transcription in the cytoplasm of viral DNA into RNA using the four ribonucleoside triphosphates as substrates. Forms the polymerase active center together with RPB2. Part of the core element with the central large cleft, the clamp element that moves to open and close the cleft and the jaws that are thought to grab the incoming DNA template. This African swine fever virus (isolate Tick/South Africa/Pretoriuskop Pr4/1996) (ASFV) protein is DNA-directed RNA polymerase RPB1 homolog.